The primary structure comprises 147 residues: Transcription elongation factor Spt5 (147 aa).

One can recognise a KOW domain in the interval 91-122 (KGDVVEIIAGPFKGERAKVIRVDKHKEEVTLE).

The protein belongs to the archaeal Spt5 family. Heterodimer composed of Spt4 and Spt5. Interacts with RNA polymerase (RNAP). Forms a homodimer in solution.

In terms of biological role, stimulates transcription elongation. In Methanocaldococcus jannaschii (strain ATCC 43067 / DSM 2661 / JAL-1 / JCM 10045 / NBRC 100440) (Methanococcus jannaschii), this protein is Transcription elongation factor Spt5.